A 209-amino-acid chain; its full sequence is A-type ATP synthase subunit D (209 aa).

The protein belongs to the V-ATPase D subunit family. Has multiple subunits with at least A(3), B(3), C, D, E, F, H, I and proteolipid K(x).

The protein localises to the cell membrane. Functionally, component of the A-type ATP synthase that produces ATP from ADP in the presence of a proton gradient across the membrane. In Thermoplasma volcanium (strain ATCC 51530 / DSM 4299 / JCM 9571 / NBRC 15438 / GSS1), this protein is A-type ATP synthase subunit D.